Here is a 402-residue protein sequence, read N- to C-terminus: Advanced glycosylation end product-specific receptor (402 aa).

The N-terminal stretch at methionine 1 to glycine 22 is a signal peptide. The 87-residue stretch at glycine 23–lysine 109 folds into the Ig-like V-type domain. Topologically, residues glycine 23 to alanine 340 are extracellular. N-linked (GlcNAc...) asparagine glycosylation is found at asparagine 25 and asparagine 80. Cystine bridges form between cysteine 38/cysteine 98 and cysteine 143/cysteine 206. 2 consecutive Ig-like C2-type domains span residues proline 123–asparagine 219 and proline 233–serine 315. The tract at residues glycine 295–glycine 332 is disordered. The chain crosses the membrane as a helical span at residues leucine 341 to tryptophan 361. The Cytoplasmic segment spans residues arginine 362–proline 402. The interval glutamine 365–proline 402 is disordered. 2 positions are modified to phosphoserine; by ATM: serine 376 and serine 389. Residues serine 376 to methionine 394 are compositionally biased toward acidic residues.

As to quaternary structure, constitutive homodimer; disulfide-linked. Forms homooligomers. Interacts with S100A1 and APP. Interacts with S100B, S100A12 and S100A14. Interacts with TIRAP. Interacts with HMGB1. Interacts with LGP2; this interaction plays an important role in AGER-mediated pro-inflammatory responses and cytokine release. Interacts with double-strand break repair protein MRE11 which is a core component of the MRN complex; the interaction enhances MRE11 endonuclease activity and promotes DNA repair. Interacts with the MCM2-7 complex via interaction with complex member MCM2; the interaction is increased following DNA replication stress and stabilizes the MCM2-7 complex at replication forks. Phosphorylated on its cytoplasmic domain by PKCzeta/PRKCZ upon ligand binding. Phosphorylated by ATM following DNA damage. Post-translationally, targeted by the ubiquitin E3 ligase subunit FBXO10 to mediate its ubiquitination and degradation. Isoform 1: Expressed at higher levels in the coronary arterioles in type 2 diabetic mice (at protein level). Endothelial cells. Expressed in lung, kidney, brain and heart. Most prevalent isoform with the highest level in heart. Isoform 2: Expressed in brain, lung, kidney and small intestine with the highest level in lung. Expressed in brain, lung, kidney and small intestine with the highest level in small intestine (at protein level). Detected in neurons of the cerebrum, bronchial epithelium, endothelial cells, tubular cells of kidney and epithelial cells of small intestine (at protein level). Expression is increased in the kidney of diabetic wild-type mice (at protein level), but not in the other tissues. Expressed only in kidney. Expression is increased in the kidney of diabetic mice. Isoform 3: Expressed in lung, kidney and heart. The second most prevalent isoform with the highest level in lung. Not expressed in brain. Isoform 4: Expressed at very low level in lung only. Isoform 5: Expressed at very low level in lung only. Isoform 6: Expressed at very low level in lung only. Isoform 7: Expressed at very low level in heart only. Isoform 8: Expressed at very low level in lung only. Isoform 9: Expressed at very low level in heart only. Isoform 10: Expressed in lung, brain, heart and kidney with a very high level in kidney. Isoform 11: Expressed in brain, kidney and heart. Not expressed in lung. Isoform 12: Expressed at very low level in lung and kidney. Isoform 13: Expressed at very low level in lung only.

The protein resides in the cell membrane. Its subcellular location is the cell projection. It localises to the phagocytic cup. The protein localises to the early endosome. It is found in the nucleus. The protein resides in the secreted. In terms of biological role, cell surface pattern recognition receptor that senses endogenous stress signals with a broad ligand repertoire including advanced glycation end products, S100 proteins, high-mobility group box 1 protein/HMGB1, amyloid beta/APP oligomers, nucleic acids, histones, phospholipids and glycosaminoglycans. Advanced glycosylation end products are nonenzymatically glycosylated proteins which accumulate in vascular tissue in aging and at an accelerated rate in diabetes. These ligands accumulate at inflammatory sites during the pathogenesis of various diseases including diabetes, vascular complications, neurodegenerative disorders and cancers, and RAGE transduces their binding into pro-inflammatory responses. Upon ligand binding, uses TIRAP and MYD88 as adapters to transduce the signal ultimately leading to the induction of inflammatory cytokines IL6, IL8 and TNFalpha through activation of NF-kappa-B. Interaction with S100A12 on endothelium, mononuclear phagocytes, and lymphocytes triggers cellular activation, with generation of key pro-inflammatory mediators. Interaction with S100B after myocardial infarction may play a role in myocyte apoptosis by activating ERK1/2 and p53/TP53 signaling. Contributes to the translocation of amyloid-beta peptide (ABPP) across the cell membrane from the extracellular to the intracellular space in cortical neurons. ABPP-initiated RAGE signaling, especially stimulation of p38 mitogen-activated protein kinase (MAPK), has the capacity to drive a transport system delivering ABPP as a complex with RAGE to the intraneuronal space. Participates in endothelial albumin transcytosis together with HMGB1 through the RAGE/SRC/Caveolin-1 pathway, leading to endothelial hyperpermeability. Mediates the loading of HMGB1 in extracellular vesicles (EVs) that shuttle HMGB1 to hepatocytes by transferrin-mediated endocytosis and subsequently promote hepatocyte pyroptosis by activating the NLRP3 inflammasome. Binds to DNA and promotes extracellular hypomethylated DNA (CpG DNA) uptake by cells via the endosomal route to activate inflammatory responses. Mediates phagocytosis by non-professional phagocytes (NPP) and this is enhanced by binding to ligands including RNA, DNA, HMGB1 and histones. Promotes NPP-mediated phagocytosis of Saccharomyces cerevisiae spores by binding to RNA attached to the spore wall. Also promotes NPP-mediated phagocytosis of apoptotic cells. Following DNA damage, recruited to DNA double-strand break sites where it colocalizes with the MRN repair complex via interaction with double-strand break repair protein MRE11. Enhances the endonuclease activity of MRE11, promoting the end resection of damaged DNA. Promotes DNA damage repair in trophoblasts which enhances trophoblast invasion and contributes to placental development and maintenance. Protects cells from DNA replication stress by localizing to damaged replication forks where it stabilizes the MCM2-7 complex and promotes faithful progression of the replication fork. Functionally, is able to advanced glycosylation end product (AGE)-induce nuclear factor NF-kappa-B activation. Down-regulates receptor for advanced glycosylation end products (RAGE)-ligand induced signaling through various MAPK pathways including ERK1/2, p38 and SAPK/JNK. Significantly affects tumor cell properties through decreasing cell migration, invasion, adhesion and proliferation, and increasing cellular apoptosis. Exhibits drastic inhibition on tumorigenesis in vitro. The polypeptide is Advanced glycosylation end product-specific receptor (Ager) (Mus musculus (Mouse)).